The sequence spans 475 residues: Ribulose bisphosphate carboxylase large chain (475 aa).

A propeptide spanning residues 1-2 (MS) is cleaved from the precursor. At proline 3 the chain carries N-acetylproline. Lysine 14 carries the post-translational modification N6,N6,N6-trimethyllysine. Substrate contacts are provided by asparagine 123 and threonine 173. The active-site Proton acceptor is the lysine 175. Lysine 177 contacts substrate. Mg(2+)-binding residues include lysine 201, aspartate 203, and glutamate 204. Lysine 201 carries the post-translational modification N6-carboxylysine. Histidine 294 functions as the Proton acceptor in the catalytic mechanism. Arginine 295, histidine 327, and serine 379 together coordinate substrate.

The protein belongs to the RuBisCO large chain family. Type I subfamily. Heterohexadecamer of 8 large chains and 8 small chains; disulfide-linked. The disulfide link is formed within the large subunit homodimers. Mg(2+) serves as cofactor. In terms of processing, the disulfide bond which can form in the large chain dimeric partners within the hexadecamer appears to be associated with oxidative stress and protein turnover.

It localises to the plastid. The protein localises to the chloroplast. It catalyses the reaction 2 (2R)-3-phosphoglycerate + 2 H(+) = D-ribulose 1,5-bisphosphate + CO2 + H2O. The catalysed reaction is D-ribulose 1,5-bisphosphate + O2 = 2-phosphoglycolate + (2R)-3-phosphoglycerate + 2 H(+). Its function is as follows. RuBisCO catalyzes two reactions: the carboxylation of D-ribulose 1,5-bisphosphate, the primary event in carbon dioxide fixation, as well as the oxidative fragmentation of the pentose substrate in the photorespiration process. Both reactions occur simultaneously and in competition at the same active site. The protein is Ribulose bisphosphate carboxylase large chain of Atriplex rosea (Red orache).